Consider the following 100-residue polypeptide: Urease subunit gamma (100 aa).

Belongs to the urease gamma subunit family. In terms of assembly, heterotrimer of UreA (gamma), UreB (beta) and UreC (alpha) subunits. Three heterotrimers associate to form the active enzyme.

Its subcellular location is the cytoplasm. It catalyses the reaction urea + 2 H2O + H(+) = hydrogencarbonate + 2 NH4(+). It functions in the pathway nitrogen metabolism; urea degradation; CO(2) and NH(3) from urea (urease route): step 1/1. This chain is Urease subunit gamma, found in Prochlorococcus marinus (strain MIT 9312).